A 238-amino-acid polypeptide reads, in one-letter code: Purine nucleoside phosphorylase DeoD-type (238 aa).

Position 4 (histidine 4) interacts with a purine D-ribonucleoside. Phosphate-binding positions include glycine 20, arginine 24, arginine 43, and 87 to 90 (RVGS). Residues 179–181 (EME) and 203–204 (SD) each bind a purine D-ribonucleoside. Aspartate 204 functions as the Proton donor in the catalytic mechanism.

It belongs to the PNP/UDP phosphorylase family. In terms of assembly, homohexamer; trimer of homodimers.

The catalysed reaction is a purine D-ribonucleoside + phosphate = a purine nucleobase + alpha-D-ribose 1-phosphate. It carries out the reaction a purine 2'-deoxy-D-ribonucleoside + phosphate = a purine nucleobase + 2-deoxy-alpha-D-ribose 1-phosphate. Its function is as follows. Catalyzes the reversible phosphorolytic breakdown of the N-glycosidic bond in the beta-(deoxy)ribonucleoside molecules, with the formation of the corresponding free purine bases and pentose-1-phosphate. In Haemophilus influenzae (strain PittGG), this protein is Purine nucleoside phosphorylase DeoD-type.